The sequence spans 93 residues: Neutrophil cationic peptide 2 (93 aa).

The N-terminal stretch at 1-19 (MRTVPLFAACLLLTLMAQA) is a signal peptide. A propeptide spanning residues 20-62 (EPLPRAADHSDTKMKGDREDHVAVISFWEEESTSLQDAGAGAG) is cleaved from the precursor. 3 cysteine pairs are disulfide-bonded: Cys-65/Cys-93, Cys-67/Cys-82, and Cys-72/Cys-92.

This sequence belongs to the alpha-defensin family.

The protein localises to the secreted. Its function is as follows. Has antibiotic, anti-fungi and antiviral activity. The chain is Neutrophil cationic peptide 2 from Cavia porcellus (Guinea pig).